The primary structure comprises 148 residues: MSQLKRILLLNGPNLNMLGVREPTHYGSLSLKTIEQDLQSLAQQYAVELSCFQANSEEKLIEKIHQSFQQIDFIIINPAAFTHTSVALRDALLAVAIPFVEVHLSNVHKREPFRHHSYFSDVAEGVICGLGAKGYEFALQFAVSFLKK.

The active-site Proton acceptor is Tyr26. Substrate-binding residues include Asn77, His83, and Asp90. The Proton donor role is filled by His103. Residues 104-105 and Arg114 contribute to the substrate site; that span reads LS.

This sequence belongs to the type-II 3-dehydroquinase family. In terms of assembly, homododecamer.

It catalyses the reaction 3-dehydroquinate = 3-dehydroshikimate + H2O. It participates in metabolic intermediate biosynthesis; chorismate biosynthesis; chorismate from D-erythrose 4-phosphate and phosphoenolpyruvate: step 3/7. In terms of biological role, catalyzes a trans-dehydration via an enolate intermediate. This chain is 3-dehydroquinate dehydratase (aroQ), found in Pasteurella multocida (strain Pm70).